The sequence spans 67 residues: Large ribosomal subunit protein uL29 (67 aa).

The protein belongs to the universal ribosomal protein uL29 family.

In Alkaliphilus metalliredigens (strain QYMF), this protein is Large ribosomal subunit protein uL29.